Here is a 70-residue protein sequence, read N- to C-terminus: DNA-directed RNA polymerase subunit epsilon (70 aa).

It belongs to the RNA polymerase subunit epsilon family. In terms of assembly, RNAP is composed of a core of 2 alpha, a beta and a beta' subunit. The core is associated with a delta subunit, and at least one of epsilon or omega. When a sigma factor is associated with the core the holoenzyme is formed, which can initiate transcription.

The enzyme catalyses RNA(n) + a ribonucleoside 5'-triphosphate = RNA(n+1) + diphosphate. In terms of biological role, a non-essential component of RNA polymerase (RNAP). The sequence is that of DNA-directed RNA polymerase subunit epsilon from Leuconostoc mesenteroides subsp. mesenteroides (strain ATCC 8293 / DSM 20343 / BCRC 11652 / CCM 1803 / JCM 6124 / NCDO 523 / NBRC 100496 / NCIMB 8023 / NCTC 12954 / NRRL B-1118 / 37Y).